Here is an 897-residue protein sequence, read N- to C-terminus: Ubiquitin carboxyl-terminal hydrolase 33 (897 aa).

Residues 7-110 form a UBP-type zinc finger; that stretch reads NDCPHLECVG…KQLPNAAKAV (104 aa). Positions 9, 11, 31, 34, 44, 49, 54, 61, 65, 71, 84, and 87 each coordinate Zn(2+). One can recognise a USP domain in the interval 156-670; that stretch reads TGLKNIGNTC…EAYVLFYKKS (515 aa). Residue cysteine 165 is the Nucleophile of the active site. Disordered regions lie at residues 261–308 and 343–420; these read LIPE…GPRV and GSHG…HKKV. Residues 287–297 show a composition bias toward polar residues; that stretch reads DDFQSCESCGS. 2 stretches are compositionally biased toward basic and acidic residues: residues 299-308 and 344-353; these read DRADNEGPRV and SHGDLDKDVD. The segment covering 355-396 has biased composition (polar residues); that stretch reads TSDSRPIISSQGAIKAQGRTSDSEIQVSSTVRPQSPTGNEGI. The segment covering 398–411 has biased composition (low complexity); that stretch reads SRLSSSPPKSSAWP. Histidine 628 serves as the catalytic Proton acceptor. DUSP domains follow at residues 672 to 765 and 773 to 876; these read DETQ…LYVC and EKLE…RPSV. A compositionally biased stretch (low complexity) spans 875 to 884; that stretch reads SVSHQESETS. Positions 875–897 are disordered; that stretch reads SVSHQESETSQSEEKIEVETRTV. The segment covering 886-897 has biased composition (basic and acidic residues); the sequence is SEEKIEVETRTV.

It belongs to the peptidase C19 family. USP20/USP33 subfamily.

The protein localises to the cytoplasm. Its subcellular location is the perinuclear region. The protein resides in the cytoskeleton. It localises to the microtubule organizing center. It is found in the centrosome. The enzyme catalyses Thiol-dependent hydrolysis of ester, thioester, amide, peptide and isopeptide bonds formed by the C-terminal Gly of ubiquitin (a 76-residue protein attached to proteins as an intracellular targeting signal).. In terms of biological role, deubiquitinating enzyme involved in various processes such as centrosome duplication, cellular migration and beta-2 adrenergic receptor/ADRB2 recycling. Involved in regulation of centrosome duplication by mediating deubiquitination of ccp110 in S and G2/M phase, leading to stabilize ccp110 during the period which centrioles duplicate and elongate. Involved in cell migration via its interaction with intracellular domain of robo1, leading to regulate the Slit signaling. Plays a role in commissural axon guidance cross the ventral midline of the neural tube in a Slit-dependent manner, possibly by mediating the deubiquitination of robo1. Acts as a regulator of G-protein coupled receptor (GPCR) signaling by mediating the deubiquitination of beta-arrestins (arrb1 and arrb2) and beta-2 adrenergic receptor (adrb2). Deubiquitinates dio2, thereby regulating thyroid hormone regulation. Mediates deubiquitination of both 'Lys-48'- and 'Lys-63'-linked polyubiquitin chains. The protein is Ubiquitin carboxyl-terminal hydrolase 33 (usp33) of Danio rerio (Zebrafish).